A 346-amino-acid chain; its full sequence is Mannonate dehydratase (346 aa).

It belongs to the mannonate dehydratase family. Requires Fe(2+) as cofactor. Mn(2+) serves as cofactor.

The enzyme catalyses D-mannonate = 2-dehydro-3-deoxy-D-gluconate + H2O. It functions in the pathway carbohydrate metabolism; pentose and glucuronate interconversion. In terms of biological role, catalyzes the dehydration of D-mannonate. The protein is Mannonate dehydratase of Cupriavidus taiwanensis (strain DSM 17343 / BCRC 17206 / CCUG 44338 / CIP 107171 / LMG 19424 / R1) (Ralstonia taiwanensis (strain LMG 19424)).